Consider the following 677-residue polypeptide: MTQVAKKILVTCALPYANGSIHLGHMLEHIQADVWVRYQRMRGHEVNFICADDAHGTPIMLKAQQLGITPEQMIGEMSQEHQTDFAGFNISYDNYHSTHSEENRQLSELIYSRLKENGFIKNRTISQLYDPEKGMFLPDRFVKGTCPKCKSPDQYGDNCEVCGATYSPTELIEPKSVVSGATPVMRDSEHFFFDLPSFSEMLQAWTRSGALQEQVANKMQEWFESGLQQWDISRDAPYFGFEIPNAPGKYFYVWLDAPIGYMGSFKNLCDKRGDSVSFDKYWKKDSTAELYHFIGKDIVYFHSLFWPAMLEGSNFRKPTNLFVHGYVTVNGAKMSKSRGTFIKASTWLNHFDADSLRYYYTAKLSSRIDDIDLNLEDFVQRVNADIVNKVVNLASRNAGFINKRFDGVLASELADPQLYKTFTDAAEVIGEAWESREFGKAIREIMALADLANRYVDEQAPWVVAKQEGRDADLQAICSMGINLFRVLMTYLKPVLPKLTERAEAFLNTELTWDGIQQPLLGHKVNPFKALYNRIDMKQVEALVEASKEEVKATAAPVTGPLADDPIQETITFDDFAKVDLRVALIENAEFVEGSDKLLRLTLDLGGEKRNVFSGIRSAYPDPQALIGRHTIMVANLAPRKMRFGISEGMVMAAGPGGKDIFLLSPDAGAKPGHQVK.

The 'HIGH' region motif lies at 15–25 (PYANGSIHLGH). Residues Cys-146, Cys-149, Cys-159, and Cys-162 each coordinate Zn(2+). A 'KMSKS' region motif is present at residues 333-337 (KMSKS). Residue Lys-336 coordinates ATP. The tRNA-binding domain occupies 575–677 (DFAKVDLRVA…AGAKPGHQVK (103 aa)).

It belongs to the class-I aminoacyl-tRNA synthetase family. MetG type 1 subfamily. As to quaternary structure, homodimer. Zn(2+) serves as cofactor.

It localises to the cytoplasm. It carries out the reaction tRNA(Met) + L-methionine + ATP = L-methionyl-tRNA(Met) + AMP + diphosphate. Its function is as follows. Is required not only for elongation of protein synthesis but also for the initiation of all mRNA translation through initiator tRNA(fMet) aminoacylation. This chain is Methionine--tRNA ligase, found in Escherichia coli (strain UTI89 / UPEC).